The following is a 574-amino-acid chain: MSEHAAAPGPGPNGGGGGGAAPVRGPRGPNLNPNPLINVRDRLFHALFFKMAVTYSRLFPPAFRRLFEFFVLLKALFVLFVLAYIHIVFSRSPINCLEHVRDRWPREGVLRVEVRHNSSRAPVILQFCDGGLGGLELEPGGLELEEEELTVEMFTNSSIKFELDIEPKVFKPQSGADALNDSQDFPFPETPAKVWPQDEYIVEYSLEYGFLRLSQATRQRLSIPVMVVTLDPTRDQCFGDRFSRLLLDEFLGYDDILMSSVKGLAENEENKGFLRNVVSGEHYRFVSMWMARTSYLAAFVIMVIFTLSVSMLLRYSHHQIFVFIVDLLQMLEMNMAIAFPAAPLLTVILALVGMEAIMSEFFNDTTTAFYIILTVWLADQYDAICCHTNTSKRHWLRFFYLYHFAFYAYHYRFNGQYSSLALVTSWLFIQHSMIYFFHHYELPAILQQIRIQEMLLQTPPLGPGTPTALPDDLNNNSGSPATPDPSPPLALGPSSSPAPTGGASGPGSLGAGASVSGSDLGWVAETAAIISDASFLSGLSASLLERRPTAPSTPDSSRPDPGVPLEDAPAPAGS.

The segment at 1-27 (MSEHAAAPGPGPNGGGGGGAAPVRGPR) is disordered. Position 2 is an N-acetylserine (S2). A helical membrane pass occupies residues 69-89 (FFVLLKALFVLFVLAYIHIVF). The N-linked (GlcNAc...) asparagine glycan is linked to N180. The next 3 helical transmembrane spans lie at 293–313 (TSYL…SMLL), 337–357 (IAFP…MEAI), and 417–437 (YSSL…IYFF). 2 stretches are compositionally biased toward low complexity: residues 461 to 470 (LGPGTPTALP) and 491 to 501 (LGPSSSPAPTG). Disordered regions lie at residues 461–515 (LGPG…GASV) and 546–574 (RRPT…PAGS).

This sequence belongs to the membralin family. In terms of assembly, interacts with ERLIN2. In terms of tissue distribution, detected in brain, spinal cord, lung, liver and kidney.

It is found in the endoplasmic reticulum membrane. In terms of biological role, may have a role in the ERAD pathway required for clearance of misfolded proteins in the endoplasmic reticulum (ER). Promotes survival of motor neurons, probably by protecting against ER stress. The protein is Membralin (Tmem259) of Mus musculus (Mouse).